The primary structure comprises 290 residues: 4-diphosphocytidyl-2-C-methyl-D-erythritol kinase (290 aa).

Residue Lys10 is part of the active site. 95-105 (PVAAGLAGGSS) contacts ATP. Residue Asp137 is part of the active site.

Belongs to the GHMP kinase family. IspE subfamily.

The enzyme catalyses 4-CDP-2-C-methyl-D-erythritol + ATP = 4-CDP-2-C-methyl-D-erythritol 2-phosphate + ADP + H(+). The protein operates within isoprenoid biosynthesis; isopentenyl diphosphate biosynthesis via DXP pathway; isopentenyl diphosphate from 1-deoxy-D-xylulose 5-phosphate: step 3/6. Functionally, catalyzes the phosphorylation of the position 2 hydroxy group of 4-diphosphocytidyl-2C-methyl-D-erythritol. In Geobacillus thermodenitrificans (strain NG80-2), this protein is 4-diphosphocytidyl-2-C-methyl-D-erythritol kinase.